The chain runs to 391 residues: Transaldolase (391 aa).

The tract at residues 1-329 (MGKNLLEQLR…RLKVLDGQEH (329 aa)) is transaldolase. The active-site Schiff-base intermediate with substrate is the Lys-136. 2 consecutive EF-hand domains span residues 329-364 (HIKH…FDAL) and 365-387 (DRDH…AFRL). Ca(2+)-binding residues include Asp-342, Asp-344, Asp-346, Glu-353, Asp-365, Asp-367, Asp-369, Lys-371, and Glu-376.

This sequence belongs to the transaldolase family. Type 1 subfamily.

It localises to the cytoplasm. The catalysed reaction is D-sedoheptulose 7-phosphate + D-glyceraldehyde 3-phosphate = D-erythrose 4-phosphate + beta-D-fructose 6-phosphate. Its pathway is carbohydrate degradation; pentose phosphate pathway; D-glyceraldehyde 3-phosphate and beta-D-fructose 6-phosphate from D-ribose 5-phosphate and D-xylulose 5-phosphate (non-oxidative stage): step 2/3. Its function is as follows. Transaldolase is important for the balance of metabolites in the pentose-phosphate pathway. This Synechocystis sp. (strain ATCC 27184 / PCC 6803 / Kazusa) protein is Transaldolase.